The following is a 262-amino-acid chain: Hemin import ATP-binding protein HmuV (262 aa).

The region spanning leucine 3–glutamate 244 is the ABC transporter domain. Glycine 35–serine 42 lines the ATP pocket.

This sequence belongs to the ABC transporter superfamily. Heme (hemin) importer (TC 3.A.1.14.5) family. The complex is composed of two ATP-binding proteins (HmuV), two transmembrane proteins (HmuU) and a solute-binding protein (HmuT).

It is found in the cell inner membrane. Functionally, part of the ABC transporter complex HmuTUV involved in hemin import. Responsible for energy coupling to the transport system. In Bordetella bronchiseptica (strain ATCC BAA-588 / NCTC 13252 / RB50) (Alcaligenes bronchisepticus), this protein is Hemin import ATP-binding protein HmuV.